We begin with the raw amino-acid sequence, 506 residues long: Tyrosine-protein phosphatase non-receptor type substrate 1 (506 aa).

The first 29 residues, 1 to 29 (MEPARPAPGRLRPLLCLLLAASNAWTGTA), serve as a signal peptide directing secretion. The region spanning 30 to 145 (GDGELQVIQP…SGPGTHLTVS (116 aa)) is the Ig-like V-type domain. The Extracellular portion of the chain corresponds to 30 to 371 (GDGELQVIQP…PGPNDSNWTS (342 aa)). Cys-55 and Cys-121 are oxidised to a cystine. The N-linked (GlcNAc...) asparagine glycan is linked to Asn-92. Residues 136 to 159 (SGPGTHLTVSAKPSPPVLSGPTVR) are disordered. 2 Ig-like C1-type domains span residues 148-248 (PSPP…ANLS) and 255-348 (PTLE…HTLE). Asn-167, Asn-179, Asn-204, Asn-210, Asn-246, Asn-270, Asn-292, Asn-311, Asn-319, Asn-344, Asn-365, and Asn-368 each carry an N-linked (GlcNAc...) asparagine glycan. Cysteines 170 and 228 form a disulfide. An intrachain disulfide couples Cys-273 to Cys-331. The segment at 344-364 (NHTLEVSAPQKDQDTGQTPGP) is disordered. Residues 372-392 (IFIVVGVVCALLVALLIAALY) form a helical membrane-spanning segment. At 393 to 506 (LLRIRQNKAK…EYASVQVQRK (114 aa)) the chain is on the cytoplasmic side. A disordered region spans residues 402-468 (KGSTSSTRLH…QARPPPVSED (67 aa)). Basic and acidic residues predominate over residues 409–418 (RLHEPEKNTR). Over residues 419–429 (ETTQIQDNNDI) the composition is skewed to polar residues. Tyr-431 carries the phosphotyrosine; by Tyr-kinases modification. The SH2-binding signature appears at 432-435 (ADLN). Residues 441–446 (KSTPKA) carry the SH3-binding motif. Polar residues predominate over residues 444 to 456 (PKANEPNNHTEYA). Tyr-455, Tyr-472, and Tyr-498 each carry phosphotyrosine; by Tyr-kinases. Short sequence motifs (SH2-binding) lie at residues 455–458 (YASI), 472–475 (YADL), and 498–501 (YASV). The segment at 480–506 (LNRTPKQPAPKPEPSYSEYASVQVQRK) is disordered. Polar residues predominate over residues 497 to 506 (EYASVQVQRK).

As to quaternary structure, binds PTPN11 when tyrosine-phosphorylated, except in macrophages, where it primarily binds PTPN6. Binds GRB2 in vitro. Binds JAK2 irrespective of its phosphorylation status and forms a stable complex. Binds SCAP1 and/or SCAP2. The resulting complex recruits FYB1. Binds FGR and PTK2B. Interacts with TRIM2. In terms of processing, phosphorylated on tyrosine residues. In terms of tissue distribution, highly expressed in spleen macrophages. Detected in skin dendritic cells.

It is found in the membrane. Functionally, immunoglobulin-like cell surface receptor for CD47. Acts as docking protein and induces translocation of PTPN6, PTPN11 and other binding partners from the cytosol to the plasma membrane. Supports adhesion of cerebellar neurons, neurite outgrowth and glial cell attachment. May play a key role in intracellular signaling during synaptogenesis and in synaptic function. Involved in the negative regulation of receptor tyrosine kinase-coupled cellular responses induced by cell adhesion, growth factors or insulin. Mediates negative regulation of phagocytosis, mast cell activation and dendritic cell activation. CD47 binding prevents maturation of immature dendritic cells and inhibits cytokine production by mature dendritic cells. Plays a role in antiviral immunity and limits new world arenavirus infection by decreasing virus internalization. Receptor for THBS1. Interaction with THBS1 stimulates phosphorylation of SIRPA. In response to THBS1, involved in ROS signaling in non-phagocytic cells, stimulating NADPH oxidase-derived ROS production. This chain is Tyrosine-protein phosphatase non-receptor type substrate 1 (SIRPA), found in Bos taurus (Bovine).